Here is a 335-residue protein sequence, read N- to C-terminus: Tetraacyldisaccharide 4'-kinase (335 aa).

58-65 (TVGGSGKT) is an ATP binding site.

It belongs to the LpxK family.

The enzyme catalyses a lipid A disaccharide + ATP = a lipid IVA + ADP + H(+). It participates in glycolipid biosynthesis; lipid IV(A) biosynthesis; lipid IV(A) from (3R)-3-hydroxytetradecanoyl-[acyl-carrier-protein] and UDP-N-acetyl-alpha-D-glucosamine: step 6/6. In terms of biological role, transfers the gamma-phosphate of ATP to the 4'-position of a tetraacyldisaccharide 1-phosphate intermediate (termed DS-1-P) to form tetraacyldisaccharide 1,4'-bis-phosphate (lipid IVA). This chain is Tetraacyldisaccharide 4'-kinase, found in Shewanella oneidensis (strain ATCC 700550 / JCM 31522 / CIP 106686 / LMG 19005 / NCIMB 14063 / MR-1).